Here is a 417-residue protein sequence, read N- to C-terminus: Exodeoxyribonuclease 7 large subunit (417 aa).

Belongs to the XseA family. In terms of assembly, heterooligomer composed of large and small subunits.

It localises to the cytoplasm. It carries out the reaction Exonucleolytic cleavage in either 5'- to 3'- or 3'- to 5'-direction to yield nucleoside 5'-phosphates.. Its function is as follows. Bidirectionally degrades single-stranded DNA into large acid-insoluble oligonucleotides, which are then degraded further into small acid-soluble oligonucleotides. The protein is Exodeoxyribonuclease 7 large subunit of Lactococcus lactis subsp. lactis (strain IL1403) (Streptococcus lactis).